We begin with the raw amino-acid sequence, 177 residues long: Large ribosomal subunit protein uL6 (177 aa).

This sequence belongs to the universal ribosomal protein uL6 family. Part of the 50S ribosomal subunit.

Functionally, this protein binds to the 23S rRNA, and is important in its secondary structure. It is located near the subunit interface in the base of the L7/L12 stalk, and near the tRNA binding site of the peptidyltransferase center. The protein is Large ribosomal subunit protein uL6 of Sinorhizobium fredii (strain NBRC 101917 / NGR234).